We begin with the raw amino-acid sequence, 37 residues long: M-oxotoxin-Ot2c (37 aa).

Expressed by the venom gland.

The protein localises to the secreted. Functionally, disrupts biological membranes, particularly those rich in phosphocholine. Has antimicrobial activity against Gram-negative bacterium E.coli, Gram-positive bacteria B.subtilis and S.aureus, and hemolytic activity against sheep, pig and guinea pig red blood cells. Has insecticidal activity against S.frugiperda ovarian cells by opening non-selective ion channels. Enhances the insecticidal activity of spider venom neurotoxic peptides. This is M-oxotoxin-Ot2c from Oxyopes takobius (Lynx spider).